The chain runs to 107 residues: UPF0145 protein Memar_1285 (107 aa).

It belongs to the UPF0145 family.

The chain is UPF0145 protein Memar_1285 from Methanoculleus marisnigri (strain ATCC 35101 / DSM 1498 / JR1).